Here is a 639-residue protein sequence, read N- to C-terminus: Developmental regulatory protein wetA (639 aa).

Disordered regions lie at residues 65 to 97, 206 to 369, 418 to 552, and 587 to 613; these read MDPSHHHHHPHHHAHGESSTTSSGVSNADEFDF, TTMR…SAAS, GLLI…SADE, and LMTGVAPSGSSKTKARREKEAQERRRR. Basic residues predominate over residues 69-78; the sequence is HHHHHPHHHA. 2 stretches are compositionally biased toward polar residues: residues 81–90 and 214–226; these read ESSTTSSGVS and VSQTLQRAVSPSM. Over residues 246–255 the composition is skewed to basic residues; sequence RGRRAHRAHT. 3 stretches are compositionally biased toward low complexity: residues 256 to 275, 346 to 369, and 506 to 526; these read QHALQHQQQQHQHQQQQAHQ, QQQWQQQQQQQHNGAQQHQWSAAS, and HSSGGSAASSSQRSASGRVSV.

The protein belongs to the wetA family.

In terms of biological role, brlA, abaA and wetA are pivotal regulators of conidiophore development and conidium maturation. They act individually and together to regulate their own expression and that of numerous other sporulation-specific genes. Acts as a crucial regulator of both conidiation capacity and conidial quality. Plays a role in virulence. In Beauveria bassiana (strain ARSEF 2860) (White muscardine disease fungus), this protein is Developmental regulatory protein wetA.